The chain runs to 874 residues: Probable inorganic carbon transporter subunit DabA (874 aa).

The Zn(2+) site is built by C398, D400, H580, and C595.

It belongs to the inorganic carbon transporter (TC 9.A.2) DabA family. Forms a complex with DabB. Zn(2+) serves as cofactor.

It localises to the cell membrane. Functionally, part of an energy-coupled inorganic carbon pump. The chain is Probable inorganic carbon transporter subunit DabA from Bacillus cytotoxicus (strain DSM 22905 / CIP 110041 / 391-98 / NVH 391-98).